Consider the following 1182-residue polypeptide: Rho guanine nucleotide exchange factor osg-1 (1182 aa).

Over residues 1–12 the composition is skewed to acidic residues; sequence MLNPNDADDSDS. The tract at residues 1 to 96 is disordered; sequence MLNPNDADDS…TNSEPNVDMP (96 aa). The span at 29–41 shows a compositional bias: polar residues; it reads ATVSPSTRNSFYN. The segment covering 69 to 78 has biased composition (basic and acidic residues); that stretch reads ASRERSESRR. Positions 357 to 544 constitute a DH domain; the sequence is VRHLAARELL…HCLAVAINQH (188 aa). Residues 637-669 are a coiled coil; that stretch reads EDVQISKDTLSQLEEVERKLESSREDDRVLKKM. A disordered region spans residues 863–884; sequence INSSGSDTESSSDEGTSTAGQT. The segment covering 865-879 has biased composition (low complexity); sequence SSGSDTESSSDEGTS. Residues 897–922 are a coiled coil; that stretch reads VVNSTERVRSRARDRLARLRNSITSI.

As to expression, expressed in muscles in the body wall and head, and in the nervous system in neurons including FLP and ASE neurons in the head.

Its function is as follows. Probable guanine nucleotide exchange factor which regulates the Rho GTPase rho-1. Functions in ASE sensory neurons where it promotes neuronal degeneration under conditions of oxidative stress. In Caenorhabditis elegans, this protein is Rho guanine nucleotide exchange factor osg-1.